Consider the following 116-residue polypeptide: Iron-sulfur cluster insertion protein ErpA (116 aa).

Iron-sulfur cluster is bound by residues C44, C108, and C110.

It belongs to the HesB/IscA family. In terms of assembly, homodimer. Requires iron-sulfur cluster as cofactor.

Its function is as follows. Required for insertion of 4Fe-4S clusters for at least IspG. The protein is Iron-sulfur cluster insertion protein ErpA of Shewanella loihica (strain ATCC BAA-1088 / PV-4).